The sequence spans 120 residues: UPF0145 protein UNCMA_30400 (120 aa).

Belongs to the UPF0145 family.

This Methanocella arvoryzae (strain DSM 22066 / NBRC 105507 / MRE50) protein is UPF0145 protein UNCMA_30400.